We begin with the raw amino-acid sequence, 35 residues long: AAAAPGAAGGAQLPLGNRERKAGCKNFFWKTFSSC.

A disulfide bridge connects residues cysteine 24 and cysteine 35.

It belongs to the somatostatin family.

Its subcellular location is the secreted. In terms of biological role, somatostatin inhibits the release of somatotropin. In Lampetra fluviatilis (European river lamprey), this protein is Somatostatin (sst).